A 585-amino-acid polypeptide reads, in one-letter code: Chaperonin GroEL, chloroplastic (585 aa).

ATP-binding positions include 55 to 58, 113 to 117, Gly442, 507 to 509, and Asp523; these read TLGP, DGTTT, and NAA.

This sequence belongs to the chaperonin (HSP60) family. In terms of assembly, forms a cylinder of 14 subunits composed of two heptameric rings stacked back-to-back. Interacts with the co-chaperonin GroES.

It is found in the plastid. The protein resides in the chloroplast. The catalysed reaction is ATP + H2O + a folded polypeptide = ADP + phosphate + an unfolded polypeptide.. Together with its co-chaperonin GroES, plays an essential role in assisting protein folding. The GroEL-GroES system forms a nano-cage that allows encapsulation of the non-native substrate proteins and provides a physical environment optimized to promote and accelerate protein folding. This chain is Chaperonin GroEL, chloroplastic, found in Pyrenomonas salina.